An 852-amino-acid chain; its full sequence is Bifunctional uridylyltransferase/uridylyl-removing enzyme (852 aa).

A uridylyltransferase region spans residues 1-318 (MPANLSSALE…STPLRVTLRI (318 aa)). Positions 319–672 (DDDYIQVNNQ…SRILPKSDSF (354 aa)) are uridylyl-removing. In terms of domain architecture, HD spans 436 to 558 (VDDHILTVVR…VQTHERLSAL (123 aa)). ACT domains are found at residues 673-757 (QVMV…SRSR) and 785-852 (SVEI…EQLS).

The protein belongs to the GlnD family. Mg(2+) is required as a cofactor.

It carries out the reaction [protein-PII]-L-tyrosine + UTP = [protein-PII]-uridylyl-L-tyrosine + diphosphate. It catalyses the reaction [protein-PII]-uridylyl-L-tyrosine + H2O = [protein-PII]-L-tyrosine + UMP + H(+). Uridylyltransferase (UTase) activity is inhibited by glutamine, while glutamine activates uridylyl-removing (UR) activity. Functionally, modifies, by uridylylation and deuridylylation, the PII regulatory proteins (GlnB and homologs), in response to the nitrogen status of the cell that GlnD senses through the glutamine level. Under low glutamine levels, catalyzes the conversion of the PII proteins and UTP to PII-UMP and PPi, while under higher glutamine levels, GlnD hydrolyzes PII-UMP to PII and UMP (deuridylylation). Thus, controls uridylylation state and activity of the PII proteins, and plays an important role in the regulation of nitrogen assimilation and metabolism. The polypeptide is Bifunctional uridylyltransferase/uridylyl-removing enzyme (Neisseria meningitidis serogroup B (strain ATCC BAA-335 / MC58)).